A 557-amino-acid polypeptide reads, in one-letter code: Arginine--tRNA ligase (557 aa).

Positions 132 to 142 match the 'HIGH' region motif; that stretch reads ANPTGLLHMGN.

Belongs to the class-I aminoacyl-tRNA synthetase family. Monomer.

It is found in the cytoplasm. It catalyses the reaction tRNA(Arg) + L-arginine + ATP = L-arginyl-tRNA(Arg) + AMP + diphosphate. The sequence is that of Arginine--tRNA ligase from Carboxydothermus hydrogenoformans (strain ATCC BAA-161 / DSM 6008 / Z-2901).